We begin with the raw amino-acid sequence, 103 residues long: Small ribosomal subunit protein uS10 (103 aa).

Belongs to the universal ribosomal protein uS10 family. In terms of assembly, part of the 30S ribosomal subunit.

Functionally, involved in the binding of tRNA to the ribosomes. The sequence is that of Small ribosomal subunit protein uS10 from Escherichia coli O127:H6 (strain E2348/69 / EPEC).